The following is a 154-amino-acid chain: MGLSDGEWQLVLNVWGKVEGDLAGHGQEVLIKLFKNHPETLEKFDKFKHLKSEDEMKGSEDLKKHGNTVLTALGGILKKKGQHAAEIQPLAQSHATKHKIPIKYLEFISEAIIQVLQSKHPGDFGADAQGAMSKALELFRNDIAAKYKELGFQG.

In terms of domain architecture, Globin spans 2-148; that stretch reads GLSDGEWQLV…FRNDIAAKYK (147 aa). At Ser4 the chain carries Phosphoserine. His65 is a nitrite binding site. Position 65 (His65) interacts with O2. Thr68 is modified (phosphothreonine). Position 94 (His94) interacts with heme b.

Belongs to the globin family. Monomeric.

It localises to the cytoplasm. It is found in the sarcoplasm. It catalyses the reaction Fe(III)-heme b-[protein] + nitric oxide + H2O = Fe(II)-heme b-[protein] + nitrite + 2 H(+). The enzyme catalyses H2O2 + AH2 = A + 2 H2O. Functionally, monomeric heme protein which primary function is to store oxygen and facilitate its diffusion within muscle tissues. Reversibly binds oxygen through a pentacoordinated heme iron and enables its timely and efficient release as needed during periods of heightened demand. Depending on the oxidative conditions of tissues and cells, and in addition to its ability to bind oxygen, it also has a nitrite reductase activity whereby it regulates the production of bioactive nitric oxide. Under stress conditions, like hypoxia and anoxia, it also protects cells against reactive oxygen species thanks to its pseudoperoxidase activity. The sequence is that of Myoglobin (MB) from Spalax ehrenbergi (Middle East blind mole rat).